We begin with the raw amino-acid sequence, 288 residues long: Proteasome subunit beta (288 aa).

Positions 1–60 (MESNADWGSRGGLPQAFLTPGISSFSEFLKGFAPEYLPSGRPLPGGLGSASAAGDIAPHG) are cleaved as a propeptide — removed in mature form; by autocatalysis. The active-site Nucleophile is Thr61.

The protein belongs to the peptidase T1B family. The 20S proteasome core is composed of 14 alpha and 14 beta subunits that assemble into four stacked heptameric rings, resulting in a barrel-shaped structure. The two inner rings, each composed of seven catalytic beta subunits, are sandwiched by two outer rings, each composed of seven alpha subunits. The catalytic chamber with the active sites is on the inside of the barrel. Has a gated structure, the ends of the cylinder being occluded by the N-termini of the alpha-subunits. Is capped by the proteasome-associated ATPase, ARC.

Its subcellular location is the cytoplasm. The enzyme catalyses Cleavage of peptide bonds with very broad specificity.. The protein operates within protein degradation; proteasomal Pup-dependent pathway. Its activity is regulated as follows. The formation of the proteasomal ATPase ARC-20S proteasome complex, likely via the docking of the C-termini of ARC into the intersubunit pockets in the alpha-rings, may trigger opening of the gate for substrate entry. Interconversion between the open-gate and close-gate conformations leads to a dynamic regulation of the 20S proteasome proteolysis activity. In terms of biological role, component of the proteasome core, a large protease complex with broad specificity involved in protein degradation. This is Proteasome subunit beta from Catenulispora acidiphila (strain DSM 44928 / JCM 14897 / NBRC 102108 / NRRL B-24433 / ID139908).